A 93-amino-acid polypeptide reads, in one-letter code: Large ribosomal subunit protein uL23 (93 aa).

This sequence belongs to the universal ribosomal protein uL23 family. In terms of assembly, part of the 50S ribosomal subunit. Contacts protein L29, and trigger factor when it is bound to the ribosome.

One of the early assembly proteins it binds 23S rRNA. One of the proteins that surrounds the polypeptide exit tunnel on the outside of the ribosome. Forms the main docking site for trigger factor binding to the ribosome. This is Large ribosomal subunit protein uL23 from Campylobacter jejuni subsp. jejuni serotype O:2 (strain ATCC 700819 / NCTC 11168).